We begin with the raw amino-acid sequence, 1086 residues long: Auxin response factor 19 (1086 aa).

Positions 126–228 (FCKTLTASDT…QLMLGIRRAN (103 aa)) form a DNA-binding region, TF-B3. Positions 454 to 485 (PSKLLNFQSPNLSSANSQFNKPNTVNHISQQM) are enriched in polar residues. Disordered regions lie at residues 454–504 (PSKL…QQQQ), 545–564 (QSPN…QSML), 624–647 (LSQN…QQLQ), and 659–788 (QQQS…SVFE). The segment covering 486–504 (QAQPAMVKSQQQQQQQQQQ) has biased composition (low complexity). Residues 659–697 (QQQSIPPVSSSLQPQLSALQQTQSHQLQQLLSSQNQQPL) show a composition bias toward low complexity. The segment covering 700 to 710 (GNNSFPASTFM) has biased composition (polar residues). The segment covering 711 to 724 (QPPQIQVSPQQQGQ) has biased composition (low complexity). Residues 747–771 (SCSTSPSANNTGHDNVSPTNFLSRN) show a composition bias toward polar residues. Low complexity predominate over residues 772 to 785 (QQQGQAASVSASDS). In terms of domain architecture, PB1 spans 958–1051 (RTYTKVQKRG…EVQQMSLDGD (94 aa)).

Belongs to the ARF family. In terms of assembly, homodimers and heterodimers. Interacts with the auxin-responsive protein IAA1. Binds to JMJ30. Binds to ATXR2 in the nucleus.

It is found in the nucleus. Functionally, auxin response factors (ARFs) are transcriptional factors that bind specifically to the DNA sequence 5'-TGTCTC-3' found in the auxin-responsive promoter elements (AuxREs). Could act as transcriptional activator or repressor. Formation of heterodimers with Aux/IAA proteins may alter their ability to modulate early auxin response genes expression. Involved in ethylene responses. Regulates lateral root formation through direct regulation of LBD16 and/or LBD29. Functionally redundant with ARF7. Involved in cellular dedifferentiation during callus formation on callus-inducing medium (CIM) and in an ATXR2-dependent manner. The chain is Auxin response factor 19 from Arabidopsis thaliana (Mouse-ear cress).